The primary structure comprises 507 residues: MVTLKADEISNIIRERIEQYNREVKIVNTGTVLQVGDGIARIYGLDEVMAGELVEFEEGTIGIALNLESNNVGVVLMGDGLMIQEGSSVKATGKIAQIPVSEAYLGRVINALANPIDGRGKISASESRLIESPAPGIISRRSVYEPLQTGLIAIDSMIPIGRGQRELIIGDRQTGKTAVATDTILNQEGQNVICVYVAIGQKASSVAQVVTSLQERGAMEYTIVVAETADSPATLQYLAPYTGAALAEYFMYREQHTLIIYDDLSKQAQAYRQMSLLLRRPPGREAYPGDVFYLHSRLLERAAKLSSQLGEGSMTALPIVETQSGDVSAYIPTNVISITDGQIFLSADLFNAGIRPAINVGISVSRVGSAAQIKAMKQVAGKLKLELAQFAELEAFAQFSSDLDKATQNQLARGQRLRELLKQSQSAPLTVEEQIMTIYTGTNGYLDGLEIGQVRKFLVQLRTYLKTNKPQFQEIISSTKTLTNEAESVLKEGIQEQLERFLLQEKL.

170 to 177 provides a ligand contact to ATP; the sequence is GDRQTGKT. Thr-257 bears the Phosphothreonine mark.

This sequence belongs to the ATPase alpha/beta chains family. In terms of assembly, F-type ATPases have 2 components, CF(1) - the catalytic core - and CF(0) - the membrane proton channel. CF(1) has five subunits: alpha(3), beta(3), gamma(1), delta(1), epsilon(1). CF(0) has four main subunits: a, b, b' and c.

It is found in the plastid. It localises to the chloroplast thylakoid membrane. It carries out the reaction ATP + H2O + 4 H(+)(in) = ADP + phosphate + 5 H(+)(out). Its function is as follows. Produces ATP from ADP in the presence of a proton gradient across the membrane. The alpha chain is a regulatory subunit. The chain is ATP synthase subunit alpha, chloroplastic from Aethionema cordifolium (Lebanon stonecress).